We begin with the raw amino-acid sequence, 353 residues long: Probable transport protein YPL264C (353 aa).

Residues 1–16 lie on the Cytoplasmic side of the membrane; that stretch reads MTLQRISKDYLKPNYG. The helical transmembrane segment at 17 to 37 threads the bilayer; sequence LILLIVSYFFNSSMVVSTKVL. Positions 24 to 160 constitute an EamA 1 domain; it reads YFFNSSMVVS…SFSGVVLIIR (137 aa). Residues 38 to 51 lie on the Extracellular side of the membrane; that stretch reads ENDPLETSQSRINP. Residues 52-69 form a helical membrane-spanning segment; it reads LQILLVRMSITYCCTLVY. Topologically, residues 70-94 are cytoplasmic; the sequence is MHWNKQSVPDIPWGPAPCRKWLILR. Residues 95-115 form a helical membrane-spanning segment; the sequence is GIMGFFGVFGMYFSLMYLSIS. Residue D116 is a topological domain, extracellular. Residues 117-137 form a helical membrane-spanning segment; that stretch reads AVLITFMSPTLTIFLSFLLLG. Topologically, residues 138–144 are cytoplasmic; that stretch reads EPFSKLE. Residues 145-165 form a helical membrane-spanning segment; the sequence is ALGSLISFSGVVLIIRPTFLF. Topologically, residues 166 to 188 are extracellular; the sequence is GEQTQGQQSPQDDIVETQNPKLR. A helical membrane pass occupies residues 189–209; it reads LIAIGVSLLGVCGLSSVYIII. In terms of domain architecture, EamA 2 spans 200 to 326; it reads CGLSSVYIII…IVSSTIWVIN (127 aa). The Cytoplasmic segment spans residues 210-218; the sequence is RYIGNKAHA. The chain crosses the membrane as a helical span at residues 219–239; sequence IMSVSYFSLVTTVVAALGVLL. Topologically, residues 240–254 are extracellular; that stretch reads IPSMSLQLPHSWKQW. The chain crosses the membrane as a helical span at residues 255–275; that stretch reads GLFLNLGISGFIHQILLTMGI. At 276-282 the chain is on the cytoplasmic side; it reads QRERAGR. Residues 283-303 form a helical membrane-spanning segment; it reads GSLMTYTQVIYAVFWDVVLFH. Residue H304 is a topological domain, extracellular. The helical transmembrane segment at 305 to 325 threads the bilayer; that stretch reads WPNIWTWCGMAVIVSSTIWVI. Topologically, residues 326 to 353 are cytoplasmic; it reads NMRASKQNVVATAELLSTSDFELDDLED.

The protein resides in the membrane. The sequence is that of Probable transport protein YPL264C from Saccharomyces cerevisiae (strain ATCC 204508 / S288c) (Baker's yeast).